The primary structure comprises 287 residues: Bifunctional protein FolD 1 (287 aa).

NADP(+)-binding positions include 170-172 (GRS) and Ser-195.

This sequence belongs to the tetrahydrofolate dehydrogenase/cyclohydrolase family. Homodimer.

The enzyme catalyses (6R)-5,10-methylene-5,6,7,8-tetrahydrofolate + NADP(+) = (6R)-5,10-methenyltetrahydrofolate + NADPH. The catalysed reaction is (6R)-5,10-methenyltetrahydrofolate + H2O = (6R)-10-formyltetrahydrofolate + H(+). It participates in one-carbon metabolism; tetrahydrofolate interconversion. Its function is as follows. Catalyzes the oxidation of 5,10-methylenetetrahydrofolate to 5,10-methenyltetrahydrofolate and then the hydrolysis of 5,10-methenyltetrahydrofolate to 10-formyltetrahydrofolate. This is Bifunctional protein FolD 1 from Streptomyces avermitilis (strain ATCC 31267 / DSM 46492 / JCM 5070 / NBRC 14893 / NCIMB 12804 / NRRL 8165 / MA-4680).